A 102-amino-acid polypeptide reads, in one-letter code: UPF0213 protein in potE 3'region (102 aa).

The GIY-YIG domain maps to 6–81; that stretch reads SPWHLYMLRL…KQLSKTQKER (76 aa).

Belongs to the UPF0213 family.

This is UPF0213 protein in potE 3'region from Serratia liquefaciens.